We begin with the raw amino-acid sequence, 396 residues long: Elongation factor Tu (396 aa).

Positions 10 to 206 (KPHCNIGTIG…AVDAYIPQPE (197 aa)) constitute a tr-type G domain. The segment at 19–26 (GHVDHGKT) is G1. 19-26 (GHVDHGKT) contacts GTP. A Mg(2+)-binding site is contributed by Thr26. Residues 60 to 64 (GITIS) are G2. A G3 region spans residues 81-84 (DCPG). Residues 81–85 (DCPGH) and 136–139 (NKCD) each bind GTP. The interval 136-139 (NKCD) is G4. The tract at residues 174–176 (SAL) is G5.

Belongs to the TRAFAC class translation factor GTPase superfamily. Classic translation factor GTPase family. EF-Tu/EF-1A subfamily. As to quaternary structure, monomer.

The protein localises to the cytoplasm. It carries out the reaction GTP + H2O = GDP + phosphate + H(+). GTP hydrolase that promotes the GTP-dependent binding of aminoacyl-tRNA to the A-site of ribosomes during protein biosynthesis. This is Elongation factor Tu from Nitrobacter hamburgensis (strain DSM 10229 / NCIMB 13809 / X14).